We begin with the raw amino-acid sequence, 346 residues long: Isopentenyl-diphosphate delta-isomerase (346 aa).

9 to 10 (RK) provides a ligand contact to substrate. FMN contacts are provided by residues Ser-67, 68–70 (SMT), Ser-98, and Asn-127. 98–100 (SQR) provides a ligand contact to substrate. Gln-162 lines the substrate pocket. Glu-163 contributes to the Mg(2+) binding site. Residues Lys-194, Thr-224, 274–276 (GIR), and 295–296 (AA) each bind FMN.

This sequence belongs to the IPP isomerase type 2 family. Homooctamer. Dimer of tetramers. FMN is required as a cofactor. The cofactor is NADPH. It depends on Mg(2+) as a cofactor.

Its subcellular location is the cytoplasm. It carries out the reaction isopentenyl diphosphate = dimethylallyl diphosphate. Functionally, involved in the biosynthesis of isoprenoids. Catalyzes the 1,3-allylic rearrangement of the homoallylic substrate isopentenyl (IPP) to its allylic isomer, dimethylallyl diphosphate (DMAPP). The protein is Isopentenyl-diphosphate delta-isomerase of Stutzerimonas stutzeri (strain A1501) (Pseudomonas stutzeri).